A 146-amino-acid chain; its full sequence is Large ribosomal subunit protein uL15 (146 aa).

The interval 1–58 (MNLSELRPAPGARKKPTRKGQGIGSGLGKTAGKGHKGQNARSGGGVRPGFEGGQMPLQ) is disordered. Composition is skewed to gly residues over residues 21 to 31 (QGIGSGLGKTA) and 42 to 52 (SGGGVRPGFEG).

Belongs to the universal ribosomal protein uL15 family. Part of the 50S ribosomal subunit.

Functionally, binds to the 23S rRNA. The protein is Large ribosomal subunit protein uL15 of Desulforamulus reducens (strain ATCC BAA-1160 / DSM 100696 / MI-1) (Desulfotomaculum reducens).